The sequence spans 347 residues: ATPase GET3 (347 aa).

An ATP-binding site is contributed by 26–33 (KGGVGKTT). D57 is a catalytic residue. The ATP site is built by E240 and N267. 2 residues coordinate Zn(2+): C279 and C282.

This sequence belongs to the arsA ATPase family. Homodimer. Component of the Golgi to ER traffic (GET) complex, which is composed of GET1, GET2 and GET3. Within the complex, GET1 and GET2 form a heterotetramer which is stabilized by phosphatidylinositol binding and which binds to the GET3 homodimer. Interacts with the chloride channel protein GEF1.

It localises to the cytoplasm. Its subcellular location is the endoplasmic reticulum. The protein localises to the golgi apparatus. Its function is as follows. ATPase required for the post-translational delivery of tail-anchored (TA) proteins to the endoplasmic reticulum. Recognizes and selectively binds the transmembrane domain of TA proteins in the cytosol. This complex then targets to the endoplasmic reticulum by membrane-bound receptors GET1 and GET2, where the tail-anchored protein is released for insertion. This process is regulated by ATP binding and hydrolysis. ATP binding drives the homodimer towards the closed dimer state, facilitating recognition of newly synthesized TA membrane proteins. ATP hydrolysis is required for insertion. Subsequently, the homodimer reverts towards the open dimer state, lowering its affinity for the GET1-GET2 receptor, and returning it to the cytosol to initiate a new round of targeting. Cooperates with the HDEL receptor ERD2 to mediate the ATP-dependent retrieval of resident ER proteins that contain a C-terminal H-D-E-L retention signal from the Golgi to the ER. Involved in low-level resistance to the oxyanions arsenite and arsenate, and in heat tolerance. The polypeptide is ATPase GET3 (Scheffersomyces stipitis (strain ATCC 58785 / CBS 6054 / NBRC 10063 / NRRL Y-11545) (Yeast)).